The primary structure comprises 289 residues: RNA-binding protein CP31B, chloroplastic (289 aa).

Residues 1–71 constitute a chloroplast transit peptide; that stretch reads MTSSVLTPSL…NSSPVVTFVS (71 aa). RRM domains lie at 113–191 and 207–285; these read AKLF…RAAP and FRIY…VAEE.

ADP-ribosylated by the Pseudomonas syringae type III effector HopU1. ADP-ribosylation reduces the ability of the protein to bind RNA.

The protein localises to the plastid. Its subcellular location is the chloroplast. Functionally, required for specific RNA editing events in chloroplasts and stabilizes specific chloroplast mRNAs. The protein is RNA-binding protein CP31B, chloroplastic of Arabidopsis thaliana (Mouse-ear cress).